The chain runs to 130 residues: Sirohydrochlorin cobaltochelatase (130 aa).

The active-site Proton acceptor is the H12. H12 is a Co(2+) binding site. H12 is a Ni(2+) binding site. Substrate-binding positions include E48 and L73–H78. H78 is a Co(2+) binding site. A Ni(2+)-binding site is contributed by H78.

Belongs to the CbiX family. CbiXS subfamily. In terms of assembly, homotetramer; dimer of dimers.

It carries out the reaction Co-sirohydrochlorin + 2 H(+) = sirohydrochlorin + Co(2+). The enzyme catalyses Ni-sirohydrochlorin + 2 H(+) = sirohydrochlorin + Ni(2+). It functions in the pathway cofactor biosynthesis; adenosylcobalamin biosynthesis; cob(II)yrinate a,c-diamide from sirohydrochlorin (anaerobic route): step 1/10. Its function is as follows. Catalyzes the insertion of Co(2+) into sirohydrochlorin as part of the anaerobic pathway to cobalamin biosynthesis. Involved in the biosynthesis of the unique nickel-containing tetrapyrrole coenzyme F430, the prosthetic group of methyl-coenzyme M reductase (MCR), which plays a key role in methanogenesis and anaerobic methane oxidation. Catalyzes the insertion of Ni(2+) into sirohydrochlorin to yield Ni-sirohydrochlorin. The sequence is that of Sirohydrochlorin cobaltochelatase from Methanosarcina barkeri (strain Fusaro / DSM 804).